We begin with the raw amino-acid sequence, 822 residues long: MWSWKCLLFWAVLVTATLCTARPSPTLPEQAQPWGAPVEVESFLVHPGDLLQLRCRLRDDVQSINWLRDGVQLAESNRTRITGEEVEVQDSVPADSGLYACVTSSPSGSDTTYFSVNVSDALPSSEDDDDDDDSSSEEKETDNTKPNRMPVAPYWTSPEKMEKKLHAVPAAKTVKFKCPSSGTPNPTLRWLKNGKEFKPDHRIGGYKVRYATWSIIMDSVVPSDKGNYTCIVENEYGSINHTYQLDVVERSPHRPILQAGLPANKTVALGSNVEFMCKVYSDPQPHIQWLKHIEVNGSKIGPDNLPYVQILKTAGVNTTDKEMEVLHLRNVSFEDAGEYTCLAGNSIGLSHHSAWLTVLEALEERPAVMTSPLYLEIIIYCTGAFLISCMVGSVIVYKMKSGTKKSDFHSQMAVHKLAKSIPLRRQVTVSADSSASMNSGVLLVRPSRLSSSGTPMLAGVSEYELPEDPRWELPRDRLVLGKPLGEGCFGQVVLAEAIGLDKDKPNRVTKVAVKMLKSDATEKDLSDLISEMEMMKMIGKHKNIINLLGACTQDGPLYVIVEYASKGNLREYLQARRPPGLEYCYNPSHNPEEQLSSKDLVSCAYQVARGMEYLASKKCIHRDLAARNVLVTEDNVMKIADFGLARDIHHIDYYKKTTNGRLPVKWMAPEALFDRIYTHQSDVWSFGVLLWEIFTLGGSPYPGVPVEELFKLLKEGHRMDKPSNCTNELYMMMRDCWHAVPSQRPTFKQLVEDLDRIVALTSNQEYLDLSMPLDQYSPSFPDTRSSTCSSGEDSVFSHEPLPEEPCLPRHPAQLANGGLKRR.

Residues 1–21 (MWSWKCLLFWAVLVTATLCTA) form the signal peptide. The Extracellular segment spans residues 22–376 (RPSPTLPEQA…AVMTSPLYLE (355 aa)). Positions 25-119 (PTLPEQAQPW…DTTYFSVNVS (95 aa)) constitute an Ig-like C2-type 1 domain. Cys55 and Cys101 are oxidised to a cystine. N-linked (GlcNAc...) asparagine glycans are attached at residues Asn77 and Asn117. Positions 120–154 (DALPSSEDDDDDDDSSSEEKETDNTKPNRMPVAPY) are disordered. Positions 125–135 (SEDDDDDDDSS) are enriched in acidic residues. Basic and acidic residues predominate over residues 136–145 (SEEKETDNTK). 2 Ig-like C2-type domains span residues 158–246 (PEKM…YQLD) and 255–357 (PILQ…AWLT). A heparin-binding region spans residues 160 to 177 (KMEKKLHAVPAAKTVKFK). A disulfide bond links Cys178 and Cys230. Asn227, Asn240, Asn264, Asn296, Asn317, and Asn330 each carry an N-linked (GlcNAc...) asparagine glycan. An intrachain disulfide couples Cys277 to Cys341. A helical transmembrane segment spans residues 377 to 397 (IIIYCTGAFLISCMVGSVIVY). The Cytoplasmic portion of the chain corresponds to 398–822 (KMKSGTKKSD…QLANGGLKRR (425 aa)). Tyr463 bears the Phosphotyrosine; by autocatalysis mark. The Protein kinase domain occupies 478-767 (LVLGKPLGEG…VALTSNQEYL (290 aa)). Residues 484 to 490 (LGEGCFG), Lys514, 562 to 564 (EYA), and Asn568 each bind ATP. 2 positions are modified to phosphotyrosine; by autocatalysis: Tyr583 and Tyr585. Asp623 serves as the catalytic Proton acceptor. ATP is bound by residues Arg627 and Asp641. Tyr653, Tyr654, Tyr730, and Tyr766 each carry phosphotyrosine; by autocatalysis. Over residues 778–792 (PSFPDTRSSTCSSGE) the composition is skewed to polar residues. Residues 778–822 (PSFPDTRSSTCSSGEDSVFSHEPLPEEPCLPRHPAQLANGGLKRR) are disordered.

The protein belongs to the protein kinase superfamily. Tyr protein kinase family. Fibroblast growth factor receptor subfamily. Monomer. Homodimer after ligand binding. Interacts predominantly with FGF1 and FGF2, but can also interact with FGF3, FGF4, FGF5, FGF6, FGF8, FGF10, FGF19, FGF21, FGF22 and FGF23 (in vitro). Ligand specificity is determined by tissue-specific expression of isoforms, and differences in the third Ig-like domain are crucial for ligand specificity. Affinity for fibroblast growth factors (FGFs) is increased by heparan sulfate glycosaminoglycans that function as coreceptors. Likewise, KLB increases the affinity for FGF19, FGF21 and FGF23. Interacts (phosphorylated on Tyr-766) with PLCG1 (via SH2 domains). Interacts with FRS2. Interacts with RPS6KA1. Interacts (via C-terminus) with NEDD4 (via WW3 domain). Interacts with KL. Interacts with SHB (via SH2 domain). Interacts with GRB10. Interacts with ANOS1; this interaction does not interfere with FGF2-binding to FGFR1, but prevents binding of heparin-bound FGF2. Interacts with SOX2 and SOX3. Interacts with FLRT1, FLRT2 and FLRT3. Found in a ternary complex with FGF1 and ITGAV:ITGB3. In terms of processing, autophosphorylated. Binding of FGF family members together with heparan sulfate proteoglycan or heparin promotes receptor dimerization and autophosphorylation on tyrosine residues. Autophosphorylation occurs in trans between the two FGFR molecules present in the dimer and proceeds in a highly ordered manner. Initial autophosphorylation at Tyr-653 increases the kinase activity by a factor of 50 to 100. After this, Tyr-583 becomes phosphorylated, followed by phosphorylation of Tyr-463, Tyr-766, Tyr-583 and Tyr-585. In a third stage, Tyr-654 is autophosphorylated, resulting in a further tenfold increase of kinase activity. Phosphotyrosine residues provide docking sites for interacting proteins and so are crucial for FGFR1 function and its regulation. Post-translationally, ubiquitinated. FGFR1 is rapidly ubiquitinated by NEDD4 after autophosphorylation, leading to internalization and lysosomal degradation. CBL is recruited to activated FGFR1 via FRS2 and GRB2, and mediates ubiquitination and subsequent degradation of FGFR1. N-glycosylated in the endoplasmic reticulum. The N-glycan chains undergo further maturation to an Endo H-resistant form in the Golgi apparatus. As to expression, detected in astrocytoma, neuroblastoma and adrenal cortex cell lines. Some isoforms are detected in foreskin fibroblast cell lines, however isoform 17, isoform 18 and isoform 19 are not detected in these cells.

It is found in the cell membrane. It localises to the nucleus. Its subcellular location is the cytoplasm. The protein resides in the cytosol. The protein localises to the cytoplasmic vesicle. The catalysed reaction is L-tyrosyl-[protein] + ATP = O-phospho-L-tyrosyl-[protein] + ADP + H(+). Present in an inactive conformation in the absence of bound ligand. Ligand binding leads to dimerization and activation by sequential autophosphorylation on tyrosine residues. Inhibited by ARQ 069; this compound maintains the kinase in an inactive conformation and inhibits autophosphorylation. Inhibited by PD173074. Its function is as follows. Tyrosine-protein kinase that acts as a cell-surface receptor for fibroblast growth factors and plays an essential role in the regulation of embryonic development, cell proliferation, differentiation and migration. Required for normal mesoderm patterning and correct axial organization during embryonic development, normal skeletogenesis and normal development of the gonadotropin-releasing hormone (GnRH) neuronal system. Phosphorylates PLCG1, FRS2, GAB1 and SHB. Ligand binding leads to the activation of several signaling cascades. Activation of PLCG1 leads to the production of the cellular signaling molecules diacylglycerol and inositol 1,4,5-trisphosphate. Phosphorylation of FRS2 triggers recruitment of GRB2, GAB1, PIK3R1 and SOS1, and mediates activation of RAS, MAPK1/ERK2, MAPK3/ERK1 and the MAP kinase signaling pathway, as well as of the AKT1 signaling pathway. Promotes phosphorylation of SHC1, STAT1 and PTPN11/SHP2. In the nucleus, enhances RPS6KA1 and CREB1 activity and contributes to the regulation of transcription. FGFR1 signaling is down-regulated by IL17RD/SEF, and by FGFR1 ubiquitination, internalization and degradation. In Homo sapiens (Human), this protein is Fibroblast growth factor receptor 1 (FGFR1).